A 67-amino-acid polypeptide reads, in one-letter code: Amphipathic peptide Tx348 (67 aa).

The first 23 residues, 1 to 23 (MKSQAFFLLFLVVLLLATTQSEA), serve as a signal peptide directing secretion. Phenylalanine 33 carries the post-translational modification Phenylalanine amide. The propeptide occupies 37-67 (SMRNMDTMKYLYDPSLSAADLKTLQKLMENY).

This sequence belongs to the non-disulfide-bridged peptide (NDBP) superfamily. Short antimicrobial peptide (group 4) family. Expressed by the venom gland.

It localises to the secreted. The protein localises to the target cell membrane. Functionally, amphipathic peptide that has antibacterial activities. This chain is Amphipathic peptide Tx348, found in Buthus israelis (Israeli scorpion).